The following is a 340-amino-acid chain: UDP-3-O-acylglucosamine N-acyltransferase (340 aa).

The active-site Proton acceptor is the histidine 240.

It belongs to the transferase hexapeptide repeat family. LpxD subfamily. As to quaternary structure, homotrimer.

The enzyme catalyses a UDP-3-O-[(3R)-3-hydroxyacyl]-alpha-D-glucosamine + a (3R)-hydroxyacyl-[ACP] = a UDP-2-N,3-O-bis[(3R)-3-hydroxyacyl]-alpha-D-glucosamine + holo-[ACP] + H(+). The protein operates within bacterial outer membrane biogenesis; LPS lipid A biosynthesis. Its function is as follows. Catalyzes the N-acylation of UDP-3-O-acylglucosamine using 3-hydroxyacyl-ACP as the acyl donor. Is involved in the biosynthesis of lipid A, a phosphorylated glycolipid that anchors the lipopolysaccharide to the outer membrane of the cell. This chain is UDP-3-O-acylglucosamine N-acyltransferase, found in Pseudoalteromonas translucida (strain TAC 125).